Reading from the N-terminus, the 127-residue chain is Large ribosomal subunit protein bL20 (127 aa).

The protein belongs to the bacterial ribosomal protein bL20 family.

In terms of biological role, binds directly to 23S ribosomal RNA and is necessary for the in vitro assembly process of the 50S ribosomal subunit. It is not involved in the protein synthesizing functions of that subunit. The sequence is that of Large ribosomal subunit protein bL20 from Bifidobacterium longum (strain DJO10A).